An 89-amino-acid chain; its full sequence is Small ribosomal subunit protein uS14 (89 aa).

This sequence belongs to the universal ribosomal protein uS14 family. As to quaternary structure, part of the 30S ribosomal subunit. Contacts proteins S3 and S10.

Binds 16S rRNA, required for the assembly of 30S particles and may also be responsible for determining the conformation of the 16S rRNA at the A site. The polypeptide is Small ribosomal subunit protein uS14 (Amoebophilus asiaticus (strain 5a2)).